The sequence spans 442 residues: Inner membrane protein PPF-1, chloroplastic (442 aa).

The Lumenal segment spans residues 1–108 (MAKTLISSPS…EFVLKVLKDG (108 aa)). A helical transmembrane segment spans residues 109–129 (LSSVHVPYSYGFAIILLTVIV). The Stromal segment spans residues 130-183 (KAATLPLTKQQVESTLAMQNLQPKIKAIQERYAGNQERIQLETSRLYTQAGVNP). A helical membrane pass occupies residues 184–204 (LAGCLPTLATIPVWIGLYQAL). Over 205 to 296 (SNVANEGLLT…QKNTLLIFKF (92 aa)) the chain is Lumenal. Residues 297–317 (LPLMIGYFSLSVPSGLTIYWF) form a helical membrane-spanning segment. The Stromal portion of the chain corresponds to 318 to 442 (TNNVLSTAQQ…SKRSKRKPVA (125 aa)). Disordered regions lie at residues 350 to 371 (AGQA…RQLK) and 390 to 442 (PLAS…KPVA). Residues 358–371 (SKPEKGGERFRQLK) show a composition bias toward basic and acidic residues. Polar residues predominate over residues 414 to 427 (ESNTSKVSQEVQSF). The span at 431-442 (RRSKRSKRKPVA) shows a compositional bias: basic residues.

It belongs to the OXA1/ALB3/YidC (TC 2.A.9.2) family. In terms of tissue distribution, highly expressed in apical buds. Low levels of expression in leaves. Not expressed in roots, and stems.

The protein localises to the plastid. It is found in the chloroplast thylakoid membrane. May be required for the insertion of some integral membrane proteins into the chloroplast thylakoid membrane. May play a role in inhibiting senescence. This chain is Inner membrane protein PPF-1, chloroplastic (PPF-1), found in Pisum sativum (Garden pea).